The sequence spans 287 residues: Ribosomal RNA small subunit methyltransferase A (287 aa).

S-adenosyl-L-methionine-binding residues include asparagine 28, leucine 30, glycine 55, glutamate 76, aspartate 101, and asparagine 125.

Belongs to the class I-like SAM-binding methyltransferase superfamily. rRNA adenine N(6)-methyltransferase family. RsmA subfamily.

The protein resides in the cytoplasm. It carries out the reaction adenosine(1518)/adenosine(1519) in 16S rRNA + 4 S-adenosyl-L-methionine = N(6)-dimethyladenosine(1518)/N(6)-dimethyladenosine(1519) in 16S rRNA + 4 S-adenosyl-L-homocysteine + 4 H(+). Specifically dimethylates two adjacent adenosines (A1518 and A1519) in the loop of a conserved hairpin near the 3'-end of 16S rRNA in the 30S particle. May play a critical role in biogenesis of 30S subunits. This chain is Ribosomal RNA small subunit methyltransferase A, found in Alkaliphilus oremlandii (strain OhILAs) (Clostridium oremlandii (strain OhILAs)).